The following is a 1449-amino-acid chain: Disease resistance protein RPP5 (1449 aa).

Residues 10–178 (RRYDVFPSFS…KISNDVSNKL (169 aa)) enclose the TIR domain. The active site involves E85. The NB-ARC domain occupies 192-446 (EAHIEAIKSV…IACLFNGFEV (255 aa)). LRR repeat units lie at residues 549–573 (MRNL…VYLP), 574–595 (LKLR…TFKA), 597–618 (YLVN…TLPL), 619–642 (GSLK…SNAR), 644–665 (LEEL…IQNA), 687–710 (MCNL…VYFP), 712–732 (KLRL…NFKV), 733–755 (EYLV…TQPL), 756–779 (GRLK…SLAI), 802–825 (AIKL…DLNL), 826–849 (ESLE…KMGC), 915–939 (LGSL…SKAT), 941–962 (LKHL…IGNL), 963–985 (QKLV…DVNL), 986–1011 (SSLE…SIKW), 1028–1052 (ATKL…IGNL), 1053–1077 (QNLR…NLSS), 1096–1119 (STNI…IEDF), and 1120–1143 (TRLR…IFRL).

In terms of assembly, interacts with RSH1.

It carries out the reaction NAD(+) + H2O = ADP-D-ribose + nicotinamide + H(+). In terms of biological role, TIR-NB-LRR receptor-like protein that confers resistance to the pathogen Hyaloperonospora arabidopsis isolate Noco2 (downy mildew disease). Confers resistance to H.arabidopsis isolates Emoy2, Emwa1 and Noco2. This Arabidopsis thaliana (Mouse-ear cress) protein is Disease resistance protein RPP5.